Here is a 350-residue protein sequence, read N- to C-terminus: Protein RecA (350 aa).

65 to 72 (GPESSGKT) provides a ligand contact to ATP.

This sequence belongs to the RecA family.

The protein resides in the cytoplasm. Its function is as follows. Can catalyze the hydrolysis of ATP in the presence of single-stranded DNA, the ATP-dependent uptake of single-stranded DNA by duplex DNA, and the ATP-dependent hybridization of homologous single-stranded DNAs. It interacts with LexA causing its activation and leading to its autocatalytic cleavage. This Nautilia profundicola (strain ATCC BAA-1463 / DSM 18972 / AmH) protein is Protein RecA.